We begin with the raw amino-acid sequence, 518 residues long: Protein nucleotidyltransferase YdiU (518 aa).

8 residues coordinate ATP: Gly100, Gly102, Arg103, Lys123, Asp135, Gly136, Arg193, and Arg200. Asp270 functions as the Proton acceptor in the catalytic mechanism. Residues Asn271 and Asp280 each contribute to the Mg(2+) site. Asp280 contributes to the ATP binding site.

The protein belongs to the SELO family. Requires Mg(2+) as cofactor. Mn(2+) is required as a cofactor.

It catalyses the reaction L-seryl-[protein] + ATP = 3-O-(5'-adenylyl)-L-seryl-[protein] + diphosphate. The catalysed reaction is L-threonyl-[protein] + ATP = 3-O-(5'-adenylyl)-L-threonyl-[protein] + diphosphate. It carries out the reaction L-tyrosyl-[protein] + ATP = O-(5'-adenylyl)-L-tyrosyl-[protein] + diphosphate. The enzyme catalyses L-histidyl-[protein] + UTP = N(tele)-(5'-uridylyl)-L-histidyl-[protein] + diphosphate. It catalyses the reaction L-seryl-[protein] + UTP = O-(5'-uridylyl)-L-seryl-[protein] + diphosphate. The catalysed reaction is L-tyrosyl-[protein] + UTP = O-(5'-uridylyl)-L-tyrosyl-[protein] + diphosphate. Its function is as follows. Nucleotidyltransferase involved in the post-translational modification of proteins. It can catalyze the addition of adenosine monophosphate (AMP) or uridine monophosphate (UMP) to a protein, resulting in modifications known as AMPylation and UMPylation. This is Protein nucleotidyltransferase YdiU from Xanthomonas oryzae pv. oryzae (strain PXO99A).